A 1060-amino-acid chain; its full sequence is Valine--tRNA ligase, mitochondrial (1060 aa).

A mitochondrion-targeting transit peptide spans 1 to 15; that stretch reads MPHLPLASFRPPLWG. The interval 25 to 50 is disordered; that stretch reads PQALCTQPEPHGSPVSRRNREAKQKR. A 'HIGH' region motif is present at residues 146–156; that stretch reads PNVTGSLHIGH. K548 is modified (N6-acetyllysine). Positions 659–663 match the 'KMSKS' region motif; sequence KMSKS. K662 lines the ATP pocket.

This sequence belongs to the class-I aminoacyl-tRNA synthetase family.

It is found in the mitochondrion. It catalyses the reaction tRNA(Val) + L-valine + ATP = L-valyl-tRNA(Val) + AMP + diphosphate. In terms of biological role, catalyzes the attachment of valine to tRNA(Val) in a two-step reaction: valine is first activated by ATP to form Val-AMP and then transferred to the acceptor end of tRNA(Val). The polypeptide is Valine--tRNA ligase, mitochondrial (Vars2) (Mus musculus (Mouse)).